The primary structure comprises 77 residues: Sec-independent protein translocase protein TatA (77 aa).

Residues 1 to 21 (MGSFSIWHWLIVLVIVMLVFG) traverse the membrane as a helical segment. The disordered stretch occupies residues 46 to 77 (GEGKAAADPAQSKELRDSTTIDVEAKEKTRQQ).

This sequence belongs to the TatA/E family. As to quaternary structure, the Tat system comprises two distinct complexes: a TatABC complex, containing multiple copies of TatA, TatB and TatC subunits, and a separate TatA complex, containing only TatA subunits. Substrates initially bind to the TatABC complex, which probably triggers association of the separate TatA complex to form the active translocon.

It localises to the cell inner membrane. Part of the twin-arginine translocation (Tat) system that transports large folded proteins containing a characteristic twin-arginine motif in their signal peptide across membranes. TatA could form the protein-conducting channel of the Tat system. The sequence is that of Sec-independent protein translocase protein TatA from Cupriavidus necator (strain ATCC 17699 / DSM 428 / KCTC 22496 / NCIMB 10442 / H16 / Stanier 337) (Ralstonia eutropha).